Reading from the N-terminus, the 410-residue chain is Voltage-dependent chloride channel 1, chloroplastic (410 aa).

At 1–110 the chain is on the lumenal, thylakoid side; it reads MYQSMNLSVS…RHLLSSFSSR (110 aa). Residues 111 to 131 traverse the membrane as a helical segment; it reads VILSLIPPVFFFTSVAVVIAS. The Stromal segment spans residues 132–147; that stretch reads YNSAVALDWLPGIFPI. Residues 148–168 traverse the membrane as a helical segment; sequence LRSSSLPYQLTAPALALLLVF. The Lumenal, thylakoid portion of the chain corresponds to 169–315; the sequence is RTEASYSRYE…PLSYTRLTSR (147 aa). 2 helical membrane passes run 316–336 and 337–357; these read FLVF…HWIV and VPAT…GVLI. Residues 358-410 lie on the Lumenal, thylakoid side of the membrane; it reads EEPFPMLALDELCDLVHSNIQEAVKSEKVIRNRIIAKIKLHEFKHSSNGRHRS.

It belongs to the anion channel-forming bestrophin (TC 1.A.46) family. Voltage-dependent chloride channel subfamily. As to expression, mostly expressed in flowers and leaves and, to a lower extent, in stems and roots.

It is found in the plastid. Its subcellular location is the chloroplast thylakoid membrane. The catalysed reaction is chloride(in) = chloride(out). More active at positive than at negative voltages. Repressed by the general anion channel inhibitors dithiocyanatostilbene-2,20-disulphonic acid (DIDS) and niflumic acid. Functionally, voltage-dependent chloride (Cl) channel critical for proton motive force (PMF) partitioning across the thylakoid membrane by anion influx into the lumen during illumination, thus being required for photoprotection under fluctuating light conditions. Influences thylakoid ultrastructure, including lumen size and organization. During photosynthetic response on transition from dark to low light, involved in a sequential mechanism of adaptation; VCCN1 and CLCe first trigger the activation of photoprotection, which is later down-regulated by KEA3 to a low steady state, while adjusting electron transport. On transition from low to high light, accelerates the activation of photoprotection by building up a pH gradient across the thylakoid membrane. The sequence is that of Voltage-dependent chloride channel 1, chloroplastic from Arabidopsis thaliana (Mouse-ear cress).